A 970-amino-acid polypeptide reads, in one-letter code: MAVEKSNTTVGGVEILKPRTDNREYRMIVLKNLLQVLLISDPDTDKCAASMSVSVGSFSDPQGLEGLAHFLEHMLFYASEKYPEEDSYSKYITEHGGSTNAYTASEETNYHFDVNADCFDEALDRFAQFFIKPLMSADATMREIKAVDSENQKNLLSDGWRIRQLQKHLSKEDHPYHKFSTGNMDTLHVRPQAKGVDTRSELIKFYEEHYSANIMHLVVYGKESLDKIQDLVERMFQEIQNTNKVVPRFPGQPCTADHLQILVKAIPIKQGHKLGVSWPVTPSIHHYDEAPSQYLGHLIGHEGEGSLFHALKTLGWATGLSAGEGEWTLDYSFFKVSIDLTDAGHEHMQEILGLLFNYIQLLQQTGVCQWIFDELSAICETKFHYQDKIPPMSYIVDIASNMQIYPTKDWLVGSSLPTKFNPAIVQKVVDELSPSNFRIFWESQKFEGQTDKAEPWYNTAYSLEKITSSTIQEWVQSAPDVHLHLPAPNVFIPTDLSLKDADDKETVPVLLRKTPFSRLWYKPDTMFSKPKAYVKMDFNCPLAVSSPDAAVLTDIFTRLLMDYLNEYAYYAQVAGLYYGVSLSDNGFELTLLGYNHKLRILLETVVGKIANFEVKPDRFAVIKETVTKEYQNYKFRQPYHQAMYYCSLILQDQTWPWTEELDVLSHLEAEDVAKFVPMLLSRTFIECYIAGNVENNEAESMVKHIEDVLFNDPKPICRPLFPSQHLTNRVVKLGEGMKYFYHQDGSNPSDENSALVHYIQVHRDDFSMNIKLQLFGLVAKQATFHQLRTVEQLGYITALAQRNDSGIYGVQFIIQSSVKGPGHIDSRVESLLKNFESKLYEMSNEDFKSNVTALIDMKLEKHKNLKEESRFYWREIQSGTLKFNRKEAEVSALKQLQKQELIDFFDEYIKVGAARKKSLSIRVYGSQHLKEMASDKDEVPSPSVEIEDIVGFRKSQPLHGSFRGCGQPKL.

His-69 serves as a coordination point for Zn(2+). Glu-72 (proton acceptor) is an active-site residue. Position 73 (His-73) interacts with Zn(2+). Residue Glu-143 is part of the active site. Glu-150 contributes to the Zn(2+) binding site.

Belongs to the peptidase M16 family. It depends on Zn(2+) as a cofactor.

The protein localises to the peroxisome. Functionally, peptidase that might be involved in pathogen or wound response. Not required for peroxisome biogenesis, indole-3-butyric acid (IBA) metabolism, fatty acid beta-oxidation or degradation of glyoxylate cycle enzymes during seedling development. This Arabidopsis thaliana (Mouse-ear cress) protein is Insulin-degrading enzyme-like 1, peroxisomal (PXM16).